The chain runs to 515 residues: Pre-glycoprotein polyprotein GP complex (515 aa).

Gly2 is lipidated: N-myristoyl glycine; by host. The Extracellular portion of the chain corresponds to 2–17 (GQVIGFFQSLPEIINE). The chain crosses the membrane as a helical span at residues 18–33 (ALNIALICVALLATIK). Topologically, residues 34 to 58 (GMVNIWKSGLIQLLFFLTLAGRSCS) are cytoplasmic. Cys57 lines the Zn(2+) pocket. The Extracellular segment spans residues 59 to 453 (HSFTIGRFHE…QGRTPLSLVD (395 aa)). 4 cysteine pairs are disulfide-bonded: Cys87–Cys255, Cys300–Cys313, Cys322–Cys331, and Cys385–Cys406. Residues Asn90, Asn112, Asn127, Asn180, and Asn248 are each glycosylated (N-linked (GlcNAc...) asparagine; by host). N-linked (GlcNAc...) asparagine; by host glycans are attached at residues Asn386, Asn394, and Asn416. A helical transmembrane segment spans residues 454–474 (LCFWSTLFYISTLFAHLVGFP). At 475–515 (THRHLIGEGCPKPHRLTGSGICSCGHYGIPGKPVRWTKMSR) the chain is on the cytoplasmic side. Residues His476, His478, Cys484, His488, Cys496, and Cys498 each contribute to the Zn(2+) site.

It belongs to the arenaviridae GPC protein family. As to quaternary structure, interacts with glycoprotein G2. Part of the GP complex (GP-C) together with glycoprotein G1 and glycoprotein G2. The GP-complex interacts with protein Z, which interacts with ribonucleocapsid; these interactions may induce virion budding. In terms of assembly, homotrimer; disulfide-linked. In pre-fusion state, G1 homotrimers bind G2 homotrimers via ionic interactions. Part of the GP complex (GP-C) together with glycoprotein G2 and the stable signal peptide. The GP-complex interacts with protein Z, which interacts with ribonucleocapsid; these interactions may induce virion budding. Homotrimer. Interacts with the stable signal peptide. In pre-fusion state, G2 homotrimers bind G1 homotrimers via ionic interactions. Part of the GP complex (GP-C) together with glycoprotein G1 and the stable signal peptide. Acidification in the endosome triggers rearrangements, which ultimately leads to a 6 helix bundle formed by the two heptad repeat domains (HR1 and HR2) in post-fusion state. The GP-complex interacts with protein Z, which interacts with ribonucleocapsid; these interactions may induce virion budding. In terms of processing, specific enzymatic cleavages in vivo yield mature proteins. GP-C polyprotein is cleaved in the endoplasmic reticulum by the host protease MBTPS1. Only cleaved glycoprotein is incorporated into virions. The SSP remains stably associated with the GP complex following cleavage by signal peptidase and plays crucial roles in the trafficking of GP through the secretory pathway. Post-translationally, myristoylation is necessary for GP2-mediated fusion activity.

It localises to the virion membrane. The protein resides in the host endoplasmic reticulum membrane. It is found in the host Golgi apparatus membrane. The protein localises to the host cell membrane. In terms of biological role, functions as a cleaved signal peptide that is retained as the third component of the GP complex (GP-C). Helps to stabilize the spike complex in its native conformation. The SSP is required for efficient glycoprotein expression, post-translational maturation cleavage of G1 and G2, glycoprotein transport to the cell surface plasma membrane, formation of infectious virus particles, and acid pH-dependent glycoprotein-mediated cell fusion. Functionally, forms the virion spikes together with glycoprotein G2. The glycoprotein spike trimers are connected to the underlying matrix. Mediates virus attachment to host receptor alpha-dystroglycan DAG1. This attachment induces virion internalization predominantly through clathrin- and caveolin-independent endocytosis. Forms the virion spikes together with glycoprotein G1. The glycoprotein spike trimers are connected to the underlying matrix. Class I viral fusion protein that directs fusion of viral and host endosomal membranes, leading to delivery of the nucleocapsid into the cytoplasm. Membrane fusion is mediated by irreversible conformational changes induced by acidification. This is Pre-glycoprotein polyprotein GP complex from Latino mammarenavirus (isolate Rat/Bolivia/MARU 1924/1965) (LATV).